The sequence spans 827 residues: 4-hydroxy-3-methylbut-2-enyl diphosphate reductase (827 aa).

Positions 1–284 are 4-hydroxy-3-methylbut-2-enyl diphosphate reductase; it reads MEIIRAKHMG…MNIEKKVRGI (284 aa). Residue C12 participates in [4Fe-4S] cluster binding. Residues H40 and H79 each coordinate (2E)-4-hydroxy-3-methylbut-2-enyl diphosphate. Residues H40 and H79 each contribute to the dimethylallyl diphosphate site. Residues H40 and H79 each contribute to the isopentenyl diphosphate site. Residue C101 coordinates [4Fe-4S] cluster. H129 lines the (2E)-4-hydroxy-3-methylbut-2-enyl diphosphate pocket. H129 contacts dimethylallyl diphosphate. An isopentenyl diphosphate-binding site is contributed by H129. E131 (proton donor) is an active-site residue. T168 is a binding site for (2E)-4-hydroxy-3-methylbut-2-enyl diphosphate. Residue C196 coordinates [4Fe-4S] cluster. S224, S225, N226, and S268 together coordinate (2E)-4-hydroxy-3-methylbut-2-enyl diphosphate. Dimethylallyl diphosphate is bound by residues S224, S225, N226, and S268. Positions 224, 225, 226, and 268 each coordinate isopentenyl diphosphate. 4 consecutive S1 motif domains span residues 477-545, 562-632, 649-716, and 733-802; these read GQIV…LSIK, DDEI…LGIK, DTVI…GSLK, and GTTV…LSIK.

It in the N-terminal section; belongs to the IspH family. It depends on [4Fe-4S] cluster as a cofactor.

It catalyses the reaction isopentenyl diphosphate + 2 oxidized [2Fe-2S]-[ferredoxin] + H2O = (2E)-4-hydroxy-3-methylbut-2-enyl diphosphate + 2 reduced [2Fe-2S]-[ferredoxin] + 2 H(+). The enzyme catalyses dimethylallyl diphosphate + 2 oxidized [2Fe-2S]-[ferredoxin] + H2O = (2E)-4-hydroxy-3-methylbut-2-enyl diphosphate + 2 reduced [2Fe-2S]-[ferredoxin] + 2 H(+). The protein operates within isoprenoid biosynthesis; dimethylallyl diphosphate biosynthesis; dimethylallyl diphosphate from (2E)-4-hydroxy-3-methylbutenyl diphosphate: step 1/1. Its pathway is isoprenoid biosynthesis; isopentenyl diphosphate biosynthesis via DXP pathway; isopentenyl diphosphate from 1-deoxy-D-xylulose 5-phosphate: step 6/6. Its function is as follows. Catalyzes the conversion of 1-hydroxy-2-methyl-2-(E)-butenyl 4-diphosphate (HMBPP) into a mixture of isopentenyl diphosphate (IPP) and dimethylallyl diphosphate (DMAPP). Acts in the terminal step of the DOXP/MEP pathway for isoprenoid precursor biosynthesis. The polypeptide is 4-hydroxy-3-methylbut-2-enyl diphosphate reductase (Fusobacterium nucleatum subsp. nucleatum (strain ATCC 25586 / DSM 15643 / BCRC 10681 / CIP 101130 / JCM 8532 / KCTC 2640 / LMG 13131 / VPI 4355)).